We begin with the raw amino-acid sequence, 198 residues long: Nucleoid occlusion factor SlmA (198 aa).

The 61-residue stretch at 10 to 70 (NRREEILQSL…SLIEFIEDSL (61 aa)) folds into the HTH tetR-type domain. The segment at residues 33-52 (TTAKLAASVGVSEAALYRHF) is a DNA-binding region (H-T-H motif). Residues 117–144 (EQDRLQGRINQLFERIEAQLRQVLREKR) are a coiled coil.

This sequence belongs to the nucleoid occlusion factor SlmA family. As to quaternary structure, homodimer. Interacts with FtsZ.

The protein resides in the cytoplasm. It localises to the nucleoid. Functionally, required for nucleoid occlusion (NO) phenomenon, which prevents Z-ring formation and cell division over the nucleoid. Acts as a DNA-associated cell division inhibitor that binds simultaneously chromosomal DNA and FtsZ, and disrupts the assembly of FtsZ polymers. SlmA-DNA-binding sequences (SBS) are dispersed on non-Ter regions of the chromosome, preventing FtsZ polymerization at these regions. This is Nucleoid occlusion factor SlmA from Salmonella typhi.